A 394-amino-acid polypeptide reads, in one-letter code: Bifunctional enzyme Fae/Hps (394 aa).

The interval 1 to 162 (MEFRIGEALI…YEKDRSFHPF (162 aa)) is formaldehyde-activating enzyme. Catalysis depends on histidine 18, which acts as the Proton donor. The substrate site is built by aspartate 20, leucine 49, lysine 67, threonine 69, and glutamine 84. The tract at residues 163–394 (VGRKLTKLWD…TDQFRIMTDF (232 aa)) is 3-hexulose-6-phosphate synthase.

In the N-terminal section; belongs to the formaldehyde-activating enzyme family. It in the C-terminal section; belongs to the HPS/KGPDC family. HPS subfamily.

It catalyses the reaction 5,6,7,8-tetrahydromethanopterin + formaldehyde = 5,10-methylenetetrahydromethanopterin + H2O. The enzyme catalyses D-ribulose 5-phosphate + formaldehyde = D-arabino-hex-3-ulose 6-phosphate. It functions in the pathway carbohydrate biosynthesis; D-ribose 5-phosphate biosynthesis. Catalyzes the condensation of formaldehyde with tetrahydromethanopterin (H(4)MPT) to 5,10-methylenetetrahydromethanopterin. Functionally, catalyzes the reversible formation of ribulose-5-phosphate and formaldehyde from 3-hexulose-6-phosphate. This Archaeoglobus fulgidus (strain ATCC 49558 / DSM 4304 / JCM 9628 / NBRC 100126 / VC-16) protein is Bifunctional enzyme Fae/Hps.